The following is a 1278-amino-acid chain: ABC transporter B family member 11 (1278 aa).

Basic and acidic residues-rich tracts occupy residues 1–13 (MNGD…DSVS) and 21–35 (SPKE…EKSE). Residues 1–35 (MNGDGAREGDSVSHEPSTSKSPKEGEETKKEEKSE) are disordered. A run of 6 helical transmembrane segments spans residues 55–75 (VLLM…LPFM), 106–126 (FVYL…CWMI), 182–202 (FIQL…KGWL), 205–225 (LVML…ALIV), 285–305 (GLGL…AIWF), and 314–334 (GYTG…SMSL). Residues 58 to 346 (MICGSIGAIG…TSPCVTAFAA (289 aa)) enclose the ABC transmembrane type-1 1 domain. Residues 381-617 (IELKDVHFSY…SEGAYSQLIR (237 aa)) form the ABC transporter 1 domain. ATP is bound at residue 416–423 (GESGSGKS). 3 N-linked (GlcNAc...) asparagine glycosylation sites follow: N483, N568, and N653. The span at 629 to 654 (ELSSGSSFRNSNLKKSMEGTSSVGNS) shows a compositional bias: polar residues. A disordered region spans residues 629 to 656 (ELSSGSSFRNSNLKKSMEGTSSVGNSSR). One can recognise an ABC transmembrane type-1 2 domain in the interval 710-997 (LLLGTVAAAI…SSTFAPDSSK (288 aa)). Transmembrane regions (helical) follow at residues 711–731 (LLGT…GILI) and 751–771 (FWAI…PTQM). N-linked (GlcNAc...) asparagine glycosylation occurs at N806. 4 helical membrane passes run 824–844 (ALVG…ASGL), 845–865 (IIAF…LPLI), 932–952 (GFIS…VYAT), and 971–991 (VFQV…SSTF). The ABC transporter 2 domain maps to 1032 to 1271 (IELRHLSFTY…EGGVYASLVQ (240 aa)). Position 1067–1074 (1067–1074 (GESGSGKS)) interacts with ATP. N1121 and N1222 each carry an N-linked (GlcNAc...) asparagine glycan.

This sequence belongs to the ABC transporter superfamily. ABCB family. Multidrug resistance exporter (TC 3.A.1.201) subfamily. In terms of tissue distribution, present in roots and flower buds.

It localises to the membrane. It catalyses the reaction (indol-3-yl)acetate(in) + ATP + H2O = (indol-3-yl)acetate(out) + ADP + phosphate + H(+). In terms of biological role, involved in the regulation of auxin transport required for pistil elongation. This Arabidopsis thaliana (Mouse-ear cress) protein is ABC transporter B family member 11.